A 428-amino-acid chain; its full sequence is Flotillin-2 (428 aa).

S-palmitoyl cysteine attachment occurs at residues Cys-4, Cys-19, and Cys-20.

The protein belongs to the band 7/mec-2 family. Flotillin subfamily. In terms of assembly, heterooligomeric complex of flotillins 1 and 2. In terms of processing, palmitoylation may be required for the formation of higher order complexes and for neurite outgrowth in cultured neural stem cells. As to expression, normally expressed in growing retinal exons of newly differentiated ganglion cells at the retinal margin. After optic nerve injury, expressed in all retinal ganglion cells and retinal axons. Also expressed in endothelial cells, spinal cord, larval and adult skin, muscle processes, thymus and gill macrophages.

It is found in the membrane. The protein localises to the endosome. In terms of biological role, may play a role in axon growth and regeneration. May be involved in epidermal cell adhesion and epidermal structure and function. The polypeptide is Flotillin-2 (flot2) (Carassius auratus (Goldfish)).